A 499-amino-acid polypeptide reads, in one-letter code: UDP-N-acetylmuramoylalanine--D-glutamate ligase (499 aa).

129-135 serves as a coordination point for ATP; that stretch reads GTNGKTT.

The protein belongs to the MurCDEF family.

Its subcellular location is the cytoplasm. The catalysed reaction is UDP-N-acetyl-alpha-D-muramoyl-L-alanine + D-glutamate + ATP = UDP-N-acetyl-alpha-D-muramoyl-L-alanyl-D-glutamate + ADP + phosphate + H(+). It functions in the pathway cell wall biogenesis; peptidoglycan biosynthesis. Functionally, cell wall formation. Catalyzes the addition of glutamate to the nucleotide precursor UDP-N-acetylmuramoyl-L-alanine (UMA). The chain is UDP-N-acetylmuramoylalanine--D-glutamate ligase from Ralstonia nicotianae (strain ATCC BAA-1114 / GMI1000) (Ralstonia solanacearum).